The primary structure comprises 247 residues: Uridylate kinase (247 aa).

An ATP-binding site is contributed by 11–14 (KASG). The segment at 19–24 (GKQGFG) is involved in allosteric activation by GTP. Position 53 (glycine 53) interacts with UMP. The ATP site is built by glycine 54 and arginine 58. Residues aspartate 73 and 134 to 141 (TGNPFFTT) contribute to the UMP site. ATP contacts are provided by threonine 161, glutamine 162, tyrosine 167, and aspartate 170.

Belongs to the UMP kinase family. In terms of assembly, homohexamer.

The protein resides in the cytoplasm. The catalysed reaction is UMP + ATP = UDP + ADP. Its pathway is pyrimidine metabolism; CTP biosynthesis via de novo pathway; UDP from UMP (UMPK route): step 1/1. Its activity is regulated as follows. Allosterically activated by GTP. Inhibited by UTP. Functionally, catalyzes the reversible phosphorylation of UMP to UDP. This chain is Uridylate kinase, found in Chelativorans sp. (strain BNC1).